The following is a 110-amino-acid chain: MNKILLIGRMTKNPSIKQIETTGNNRCNFTIAVNRRVRNTNGENEADFIPVTVWGKTAENVARYMKKGYLVGVSGRLQVRTYQDVDGNRKYITEVVGEEVQFLETKKEAV.

Positions 1–104 constitute an SSB domain; it reads MNKILLIGRM…VVGEEVQFLE (104 aa).

As to quaternary structure, homotetramer.

The protein is Single-stranded DNA-binding protein 1 (ssb1) of Clostridium acetobutylicum (strain ATCC 824 / DSM 792 / JCM 1419 / IAM 19013 / LMG 5710 / NBRC 13948 / NRRL B-527 / VKM B-1787 / 2291 / W).